Consider the following 291-residue polypeptide: Bifunctional protein FolD (291 aa).

NADP(+) is bound by residues 168 to 170 (GRG), T195, and I236.

Belongs to the tetrahydrofolate dehydrogenase/cyclohydrolase family. In terms of assembly, homodimer.

It carries out the reaction (6R)-5,10-methylene-5,6,7,8-tetrahydrofolate + NADP(+) = (6R)-5,10-methenyltetrahydrofolate + NADPH. The catalysed reaction is (6R)-5,10-methenyltetrahydrofolate + H2O = (6R)-10-formyltetrahydrofolate + H(+). It functions in the pathway one-carbon metabolism; tetrahydrofolate interconversion. In terms of biological role, catalyzes the oxidation of 5,10-methylenetetrahydrofolate to 5,10-methenyltetrahydrofolate and then the hydrolysis of 5,10-methenyltetrahydrofolate to 10-formyltetrahydrofolate. The polypeptide is Bifunctional protein FolD (Bifidobacterium longum subsp. infantis (strain ATCC 15697 / DSM 20088 / JCM 1222 / NCTC 11817 / S12)).